A 207-amino-acid chain; its full sequence is Large ribosomal subunit protein uL4 (207 aa).

Residues 48–86 are disordered; it reads THKVKNRSEVRGGGRKPWRQKGTGRARQGSIRSPQWRGG. Basic residues predominate over residues 60–71; it reads GGRKPWRQKGTG.

Belongs to the universal ribosomal protein uL4 family. In terms of assembly, part of the 50S ribosomal subunit.

In terms of biological role, one of the primary rRNA binding proteins, this protein initially binds near the 5'-end of the 23S rRNA. It is important during the early stages of 50S assembly. It makes multiple contacts with different domains of the 23S rRNA in the assembled 50S subunit and ribosome. Its function is as follows. Forms part of the polypeptide exit tunnel. In Bacillus licheniformis (strain ATCC 14580 / DSM 13 / JCM 2505 / CCUG 7422 / NBRC 12200 / NCIMB 9375 / NCTC 10341 / NRRL NRS-1264 / Gibson 46), this protein is Large ribosomal subunit protein uL4.